Reading from the N-terminus, the 244-residue chain is WUSCHEL-related homeobox 3 (244 aa).

Residues Val4 to Leu68 constitute a DNA-binding region (homeobox; WUS-type).

Belongs to the WUS homeobox family. Expressed in aerial parts of seedlings, inflorescences and flowers at low level. Expressed in a restricted number of L1 cells at the lateral regions of flower primordia.

It localises to the nucleus. Probable transcription factor required to initiate organ founder cells in a lateral domain of shoot meristems. Involved in the lateral sepal axis-dependent development of flowers, probably by regulating the proliferation of L1 cells at the lateral region of flower primordia. Required for the formation of the margin cells of the first and second whorl organs. This Arabidopsis thaliana (Mouse-ear cress) protein is WUSCHEL-related homeobox 3 (WOX3).